The sequence spans 410 residues: Exopolygalacturonase (410 aa).

The signal sequence occupies residues 1 to 22 (MACTNNAMRALFLLVLFCIVHG). N-linked (GlcNAc...) asparagine glycosylation is present at N89. 5 PbH1 repeats span residues 192–218 (CKDM…HMGD), 219–240 (SSGI…SIGP), 242–262 (TSKV…SIGS), 272–293 (VTDI…RIKA), and 337–377 (ASKV…TMDD). D233 functions as the Proton donor in the catalytic mechanism. A disulfide bridge connects residues C235 and C252. N-linked (GlcNAc...) asparagine glycosylation occurs at N246. The active site involves H256. Residue N349 is glycosylated (N-linked (GlcNAc...) asparagine). An intrachain disulfide couples C364 to C370. An N-linked (GlcNAc...) asparagine glycan is attached at N387. The cysteines at positions 393 and 409 are disulfide-linked.

Belongs to the glycosyl hydrolase 28 family. In terms of tissue distribution, pollen.

The protein localises to the secreted. Its subcellular location is the cell wall. It catalyses the reaction [(1-&gt;4)-alpha-D-galacturonosyl](n) + H2O = alpha-D-galacturonate + [(1-&gt;4)-alpha-D-galacturonosyl](n-1). In terms of biological role, may function in depolymerizing pectin during pollen development, germination, and tube growth. Acts as an exo-polygalacturonase. This Zea mays (Maize) protein is Exopolygalacturonase (PG1).